The following is a 264-amino-acid chain: tRNA (guanine-N(1)-)-methyltransferase (264 aa).

S-adenosyl-L-methionine-binding positions include G113 and 133–138 (IGDYVL). Residues 244 to 264 (VQQAATPGGQRRPPWHRDSRA) are disordered.

This sequence belongs to the RNA methyltransferase TrmD family. In terms of assembly, homodimer.

It is found in the cytoplasm. The enzyme catalyses guanosine(37) in tRNA + S-adenosyl-L-methionine = N(1)-methylguanosine(37) in tRNA + S-adenosyl-L-homocysteine + H(+). Its function is as follows. Specifically methylates guanosine-37 in various tRNAs. In Frankia alni (strain DSM 45986 / CECT 9034 / ACN14a), this protein is tRNA (guanine-N(1)-)-methyltransferase.